The primary structure comprises 343 residues: MTETADLWPQLLGQLLDRQSLSEAQAEQLMNGWLQNQVPDVVSGAILAALQAKGVSAGELAGMARVLQRASLGSPLDLSLLVDTCGTGGDGAGTFNISTAVAFVVSAAGIPVVKHGNRSASGKVGSADVLEALGVNLGAEPERVRAAVAEVGITFLFAPQWHPAMRAVIPYRRALKVRTIFNLLGPLVNPLYPNRQVIGVYAQELVPVMAEALRLLGREGAIVLHSREGLDEAGLDQPTDLGILSGGLVRTEVLNPADYELTLAPTQALKGGDVAENAAILTQVLQGSGTPAQQDVVALNAALALQVAGVAPDWRAGIAQAREILARGAAWDRLQQLVHFLKA.

5-phospho-alpha-D-ribose 1-diphosphate is bound by residues G86, 89 to 90 (GD), T94, 96 to 99 (NIST), 114 to 122 (KHGNRSASG), and S126. G86 is an anthranilate binding site. S98 contacts Mg(2+). N117 provides a ligand contact to anthranilate. Anthranilate is bound at residue R172. Residues D231 and E232 each contribute to the Mg(2+) site.

The protein belongs to the anthranilate phosphoribosyltransferase family. Homodimer. It depends on Mg(2+) as a cofactor.

It catalyses the reaction N-(5-phospho-beta-D-ribosyl)anthranilate + diphosphate = 5-phospho-alpha-D-ribose 1-diphosphate + anthranilate. It participates in amino-acid biosynthesis; L-tryptophan biosynthesis; L-tryptophan from chorismate: step 2/5. In terms of biological role, catalyzes the transfer of the phosphoribosyl group of 5-phosphorylribose-1-pyrophosphate (PRPP) to anthranilate to yield N-(5'-phosphoribosyl)-anthranilate (PRA). The sequence is that of Anthranilate phosphoribosyltransferase from Synechococcus sp. (strain JA-2-3B'a(2-13)) (Cyanobacteria bacterium Yellowstone B-Prime).